A 554-amino-acid chain; its full sequence is Hydroxylamine reductase (554 aa).

Positions 3, 6, 18, and 25 each coordinate [2Fe-2S] cluster. Residues histidine 252, glutamate 276, cysteine 320, cysteine 408, cysteine 436, cysteine 461, glutamate 495, and lysine 497 each contribute to the hybrid [4Fe-2O-2S] cluster site. Cysteine 408 carries the post-translational modification Cysteine persulfide.

The protein belongs to the HCP family. It depends on [2Fe-2S] cluster as a cofactor. Requires hybrid [4Fe-2O-2S] cluster as cofactor.

The protein localises to the cytoplasm. It catalyses the reaction A + NH4(+) + H2O = hydroxylamine + AH2 + H(+). Functionally, catalyzes the reduction of hydroxylamine to form NH(3) and H(2)O. This is Hydroxylamine reductase from Shewanella sp. (strain MR-7).